The primary structure comprises 478 residues: Serralysin C (478 aa).

Positions 1 to 17 (MEKNLSSRDDDALHSLS) are excised as a propeptide. Position 187 (His187) interacts with Zn(2+). Glu188 is a catalytic residue. Zn(2+) contacts are provided by His191 and Tyr227. Ca(2+) is bound by residues Arg264, Gly266, Asp296, Gly298, Gly299, Asp301, Thr338, Glu340, Gly345, Gly347, Asp349, Asn354, Ala356, Asn358, Gly362, Gly363, Ala364, Gly365, Asp367, Gly371, Gly372, Gly374, Asp376, Gly380, Gly381, Gly383, Asp385, Asp394, Asp401, and Asp411. Hemolysin-type calcium-binding repeat units follow at residues 343–360 (IGGS…DNTL) and 361–378 (RGGA…ADRL).

It belongs to the peptidase M10B family. The cofactor is Ca(2+). Zn(2+) serves as cofactor.

Its subcellular location is the secreted. It catalyses the reaction Preferential cleavage of bonds with hydrophobic residues in P1'.. The polypeptide is Serralysin C (prtC) (Dickeya chrysanthemi (Pectobacterium chrysanthemi)).